We begin with the raw amino-acid sequence, 381 residues long: tRNA N6-adenosine threonylcarbamoyltransferase (381 aa).

Positions 114 and 118 each coordinate Fe cation. Substrate-binding positions include 142-146 (VVSGG), D178, G191, D195, and N321. D349 contacts Fe cation.

This sequence belongs to the KAE1 / TsaD family. Fe(2+) serves as cofactor.

Its subcellular location is the cytoplasm. It catalyses the reaction L-threonylcarbamoyladenylate + adenosine(37) in tRNA = N(6)-L-threonylcarbamoyladenosine(37) in tRNA + AMP + H(+). In terms of biological role, required for the formation of a threonylcarbamoyl group on adenosine at position 37 (t(6)A37) in tRNAs that read codons beginning with adenine. Is involved in the transfer of the threonylcarbamoyl moiety of threonylcarbamoyl-AMP (TC-AMP) to the N6 group of A37, together with TsaE and TsaB. TsaD likely plays a direct catalytic role in this reaction. This Koribacter versatilis (strain Ellin345) protein is tRNA N6-adenosine threonylcarbamoyltransferase.